The chain runs to 240 residues: Gene 88 protein (240 aa).

This is Gene 88 protein (88) from Mycobacterium phage D29 (Mycobacteriophage D29).